Reading from the N-terminus, the 409-residue chain is 1-deoxy-D-xylulose 5-phosphate reductoisomerase (409 aa).

Positions 5, 6, 7, 8, 31, 33, and 122 each coordinate NADPH. Lys-123 provides a ligand contact to 1-deoxy-D-xylulose 5-phosphate. NADPH is bound at residue Glu-124. Asp-148 provides a ligand contact to Mn(2+). 1-deoxy-D-xylulose 5-phosphate-binding residues include Ser-149, Glu-150, Ser-186, and His-209. Glu-150 lines the Mn(2+) pocket. Gly-215 provides a ligand contact to NADPH. 4 residues coordinate 1-deoxy-D-xylulose 5-phosphate: Ser-222, Asn-227, Lys-228, and Glu-231. Mn(2+) is bound at residue Glu-231.

This sequence belongs to the DXR family. It depends on Mg(2+) as a cofactor. Requires Mn(2+) as cofactor.

The catalysed reaction is 2-C-methyl-D-erythritol 4-phosphate + NADP(+) = 1-deoxy-D-xylulose 5-phosphate + NADPH + H(+). It participates in isoprenoid biosynthesis; isopentenyl diphosphate biosynthesis via DXP pathway; isopentenyl diphosphate from 1-deoxy-D-xylulose 5-phosphate: step 1/6. Functionally, catalyzes the NADPH-dependent rearrangement and reduction of 1-deoxy-D-xylulose-5-phosphate (DXP) to 2-C-methyl-D-erythritol 4-phosphate (MEP). The chain is 1-deoxy-D-xylulose 5-phosphate reductoisomerase from Parasynechococcus marenigrum (strain WH8102).